The following is a 278-amino-acid chain: Betaine--homocysteine S-methyltransferase 1 (278 aa).

A Hcy-binding domain is found at 11 to 278 (KGILERLNSG…FGLEPRVATR (268 aa)). An N6-succinyllysine mark is found at lysine 40, lysine 93, and lysine 98. Cysteine 217 lines the Zn(2+) pocket. N6-succinyllysine is present on residues lysine 232 and lysine 241.

As to quaternary structure, homotetramer. Requires Zn(2+) as cofactor. In terms of tissue distribution, found exclusively in liver and kidney.

The protein localises to the cytoplasm. It localises to the cytosol. Its subcellular location is the nucleus. The catalysed reaction is L-homocysteine + glycine betaine = N,N-dimethylglycine + L-methionine. It functions in the pathway amine and polyamine degradation; betaine degradation; sarcosine from betaine: step 1/2. It participates in amino-acid biosynthesis; L-methionine biosynthesis via de novo pathway; L-methionine from L-homocysteine (BhmT route): step 1/1. Its activity is regulated as follows. Inhibited by dimethylglycine and methylthioacetate. In terms of biological role, involved in the regulation of homocysteine metabolism. Converts betaine and homocysteine to dimethylglycine and methionine, respectively. This reaction is also required for the irreversible oxidation of choline. This is Betaine--homocysteine S-methyltransferase 1 from Sus scrofa (Pig).